The following is a 605-amino-acid chain: Vicilin GC72-A (605 aa).

Positions 1-23 are cleaved as a signal peptide; the sequence is MVRNKSVFVVLLFSLFLSFGLLC. Disordered regions lie at residues 52–81 and 157–181; these read TRGQTEQDKCEDRSETQLKEEQQRDGEDPQ and GERENKWREEEEEESDEGEQQQRNN. A compositionally biased stretch (acidic residues) spans 166–175; sequence EEEEESDEGE. 2 consecutive Cupin type-1 domains span residues 183–341 and 387–564; these read YYFH…EQLD and FNLL…RLVD. The interval 465–485 is disordered; the sequence is SSDWSSREEEEQEEQEVERRS.

It belongs to the 7S seed storage protein family.

It is found in the vacuole. The protein localises to the aleurone grain. Seed storage protein. This Gossypium hirsutum (Upland cotton) protein is Vicilin GC72-A.